The chain runs to 219 residues: Thiamine-phosphate synthase (219 aa).

Residues 44–48 (QFREK) and Asn-79 contribute to the 4-amino-2-methyl-5-(diphosphooxymethyl)pyrimidine site. Positions 80 and 99 each coordinate Mg(2+). Ser-117 lines the 4-amino-2-methyl-5-(diphosphooxymethyl)pyrimidine pocket. 143-145 (TST) lines the 2-[(2R,5Z)-2-carboxy-4-methylthiazol-5(2H)-ylidene]ethyl phosphate pocket. Residue Lys-146 participates in 4-amino-2-methyl-5-(diphosphooxymethyl)pyrimidine binding. 2-[(2R,5Z)-2-carboxy-4-methylthiazol-5(2H)-ylidene]ethyl phosphate contacts are provided by residues Gly-175 and 195 to 196 (IS).

This sequence belongs to the thiamine-phosphate synthase family. Mg(2+) is required as a cofactor.

The enzyme catalyses 2-[(2R,5Z)-2-carboxy-4-methylthiazol-5(2H)-ylidene]ethyl phosphate + 4-amino-2-methyl-5-(diphosphooxymethyl)pyrimidine + 2 H(+) = thiamine phosphate + CO2 + diphosphate. It catalyses the reaction 2-(2-carboxy-4-methylthiazol-5-yl)ethyl phosphate + 4-amino-2-methyl-5-(diphosphooxymethyl)pyrimidine + 2 H(+) = thiamine phosphate + CO2 + diphosphate. The catalysed reaction is 4-methyl-5-(2-phosphooxyethyl)-thiazole + 4-amino-2-methyl-5-(diphosphooxymethyl)pyrimidine + H(+) = thiamine phosphate + diphosphate. It participates in cofactor biosynthesis; thiamine diphosphate biosynthesis; thiamine phosphate from 4-amino-2-methyl-5-diphosphomethylpyrimidine and 4-methyl-5-(2-phosphoethyl)-thiazole: step 1/1. Condenses 4-methyl-5-(beta-hydroxyethyl)thiazole monophosphate (THZ-P) and 2-methyl-4-amino-5-hydroxymethyl pyrimidine pyrophosphate (HMP-PP) to form thiamine monophosphate (TMP). The chain is Thiamine-phosphate synthase from Bacillus anthracis (strain A0248).